The chain runs to 135 residues: ARGOS-like protein (135 aa).

The interval 71–122 is organ Size Related (OSR) domain; that stretch reads FSLESMVVLVGLTASLLILPLILPPLPPPPFMLLLIPIGIMVLLMVLAFMPS. Transmembrane regions (helical) follow at residues 76-96 and 100-120; these read MVVL…LPPL and PFML…LAFM.

It belongs to the plant organ size related (OSR) protein family. In terms of tissue distribution, expressed in cotyledons, roots, flowers, siliques and leaves.

The protein resides in the membrane. It is found in the nucleus. It localises to the cytoplasm. The protein localises to the endoplasmic reticulum. In terms of biological role, promotes cell expansion-dependent organ growth, probably via a brassinosteroids signaling pathway. Acts downstream of BRI1. In Arabidopsis thaliana (Mouse-ear cress), this protein is ARGOS-like protein (ARL).